The primary structure comprises 520 residues: Fumarate hydratase, mitochondrial (520 aa).

The transit peptide at 1-39 directs the protein to the mitochondrion; sequence MASVAHISTAKAIFRAGGLPCRRLITPTLTGLPLKTHRM. Substrate-binding positions include 153-155, 184-187, 194-196, and threonine 242; these read SGT, HPND, and SSN. The Proton donor/acceptor role is filled by histidine 243. Serine 373 is an active-site residue. Residues serine 374 and 379-381 contribute to the substrate site; that span reads KVN.

The protein belongs to the class-II fumarase/aspartase family. Fumarase subfamily. Homotetramer.

It localises to the mitochondrion matrix. It is found in the cytoplasm. The protein resides in the nucleus. It carries out the reaction (S)-malate = fumarate + H2O. It functions in the pathway carbohydrate metabolism; tricarboxylic acid cycle; (S)-malate from fumarate: step 1/1. Functionally, catalyzes the reversible stereospecific interconversion of fumarate to L-malate. In mitochondrion, catalyzes the hydration of fumarate to L-malate in the tricarboxylic acid (TCA) cycle to facilitate a transition step in the production of energy in the form of NADH. In cytoplasm and nucleus, involved in DNA repair in response to DNA damage: following DNA double-strand breaks (DSBs), translocates from the cytosol to the nucleus and promotes DNA repair by catalyzing the dehydration of L-malate to fumarate. This is Fumarate hydratase, mitochondrial (fum1) from Schizosaccharomyces pombe (strain 972 / ATCC 24843) (Fission yeast).